Consider the following 196-residue polypeptide: RNA polymerase II subunit B1 CTD phosphatase RTR2 (196 aa).

The RTR1-type zinc-finger motif lies at 52-123; sequence YLARLLSPMS…LSQTPLHERR (72 aa). 4 residues coordinate Zn(2+): Cys-75, Cys-80, Cys-99, and His-103.

Belongs to the RPAP2 family.

The protein localises to the cytoplasm. It is found in the nucleus. The catalysed reaction is O-phospho-L-seryl-[protein] + H2O = L-seryl-[protein] + phosphate. It carries out the reaction O-phospho-L-threonyl-[protein] + H2O = L-threonyl-[protein] + phosphate. Its function is as follows. Probable RNA polymerase II subunit B1 C-terminal domain (CTD) phosphatase that regulates RNA polymerase II transcription. May have functional redundancy with RTR1. The sequence is that of RNA polymerase II subunit B1 CTD phosphatase RTR2 (RTR2) from Saccharomyces cerevisiae (strain ATCC 204508 / S288c) (Baker's yeast).